A 625-amino-acid chain; its full sequence is Glutamine--fructose-6-phosphate aminotransferase [isomerizing] (625 aa).

Catalysis depends on C2, which acts as the Nucleophile; for GATase activity. The Glutamine amidotransferase type-2 domain occupies C2 to D229. SIS domains are found at residues I296–N436 and L470–P615. K620 serves as the catalytic For Fru-6P isomerization activity.

As to quaternary structure, homodimer.

It localises to the cytoplasm. It catalyses the reaction D-fructose 6-phosphate + L-glutamine = D-glucosamine 6-phosphate + L-glutamate. Its function is as follows. Catalyzes the first step in hexosamine metabolism, converting fructose-6P into glucosamine-6P using glutamine as a nitrogen source. The chain is Glutamine--fructose-6-phosphate aminotransferase [isomerizing] from Corynebacterium diphtheriae (strain ATCC 700971 / NCTC 13129 / Biotype gravis).